Here is an 860-residue protein sequence, read N- to C-terminus: MSEQVGQREAVDSPQATGVKTPPEPCPLCRETGPPQPPSITEEGKTNEDIDFIWVACNKCDEWYHSACLFLGDEKWRGTIPKEIISTVETNFGDEGAWTNWVEWIGKWYCAPCLARSTSPSNPRPPRHPLVATMKRASIQPKDIDQAGKPLKRSASTSAPLLKSNIKRPRTSTKGQETASPEIDMKSEREQQAESTAGTPASDAPQGRPKRKTAQIDYRNLNNSIATPTHQWLELIADPEKYGRTILDANYPALPGKLLTRAWLESQPLPGQPSSISPDLLPTRFWGPDREPLIVRPENGGFSSLGGHLPSKDLTVQDVANLVGPDRMVDVIDVSSQHSSQWTLQKWAEYIQSSSGNTSVRNPKVYNVISLEISGTELAKKVKPPKIVREIDWVDNFWRFNAGAGGKDVKEKGRGNDSREGSEIRKEGSHLTEGDNGGEIEEDLEGLKEKTNTPYPKVQLYCLMGMKGAWTDWHVDFAASSVYYTIHSGAKVFFFVKPTEQNLKAYAEWSGSYEKQQDTWLGDMVDEVRKVELHAGDTMIIPTGYIHAVYTPMDSIVFGGNFLHSYNVDTQLRLRQIEIDTKVPQRFRFPMFDRLCWYVAEKYCSDLRHLRAYRPRATTTPKPPHFRVLQCLSYLANFLVSQTGILEDPEAEDKARKLVHDRIPGDIVKDPEGLAKELKWRVERELGALGLLGEEASGVEAEEFKSNGTANGSVKIKGKEVSRKRDRLSKVFDKKAISRTWDFHPPAWSENRQSPQIETTTVQLPRPSTSSSDAISGSGPGASPGASANGGANENEQAELTTMLVKQTRKRMRELDDGTVIEESQETTFVEKKTIWGPKLDKEKISQPQGKVEEDMDIDH.

3 disordered regions span residues 1–45 (MSEQ…EEGK), 117–212 (STSP…PKRK), and 408–440 (DVKE…GGEI). The PHD-type zinc-finger motif lies at 23–116 (PEPCPLCRET…KWYCAPCLAR (94 aa)). 2 stretches are compositionally biased toward basic and acidic residues: residues 183–192 (IDMKSEREQQ) and 408–433 (DVKE…HLTE). Residues 416–579 (NDSREGSEIR…TQLRLRQIEI (164 aa)) form the JmjC domain. Residue threonine 471 participates in substrate binding. 2 residues coordinate Fe cation: histidine 474 and aspartate 476. Substrate is bound at residue lysine 491. Histidine 547 contacts Fe cation. Disordered regions lie at residues 744–795 (HPPA…ANEN) and 837–860 (GPKL…DIDH). The span at 750-763 (ENRQSPQIETTTVQ) shows a compositional bias: polar residues. A compositionally biased stretch (low complexity) spans 767 to 795 (PSTSSSDAISGSGPGASPGASANGGANEN).

This sequence belongs to the JHDM1 histone demethylase family. The cofactor is Fe(2+).

Its subcellular location is the nucleus. The catalysed reaction is N(6),N(6)-dimethyl-L-lysyl(36)-[histone H3] + 2 2-oxoglutarate + 2 O2 = L-lysyl(36)-[histone H3] + 2 formaldehyde + 2 succinate + 2 CO2. In terms of biological role, histone demethylase that specifically demethylates 'Lys-36' of histone H3, thereby playing a central role in histone code. This chain is JmjC domain-containing histone demethylation protein 1 (JHD1), found in Cryptococcus neoformans var. neoformans serotype D (strain JEC21 / ATCC MYA-565) (Filobasidiella neoformans).